A 208-amino-acid chain; its full sequence is FMN-dependent NADH:quinone oxidoreductase 2 (208 aa).

The protein belongs to the azoreductase type 1 family. As to quaternary structure, homodimer. The cofactor is FMN.

It carries out the reaction 2 a quinone + NADH + H(+) = 2 a 1,4-benzosemiquinone + NAD(+). It catalyses the reaction N,N-dimethyl-1,4-phenylenediamine + anthranilate + 2 NAD(+) = 2-(4-dimethylaminophenyl)diazenylbenzoate + 2 NADH + 2 H(+). Functionally, quinone reductase that provides resistance to thiol-specific stress caused by electrophilic quinones. Its function is as follows. Also exhibits azoreductase activity. Catalyzes the reductive cleavage of the azo bond in aromatic azo compounds to the corresponding amines. This Bacillus cereus (strain ATCC 10987 / NRS 248) protein is FMN-dependent NADH:quinone oxidoreductase 2.